Consider the following 69-residue polypeptide: Putative membrane protein insertion efficiency factor (69 aa).

It belongs to the UPF0161 family.

Its subcellular location is the cell inner membrane. Functionally, could be involved in insertion of integral membrane proteins into the membrane. The protein is Putative membrane protein insertion efficiency factor of Magnetococcus marinus (strain ATCC BAA-1437 / JCM 17883 / MC-1).